Consider the following 377-residue polypeptide: Phospho-N-acetylmuramoyl-pentapeptide-transferase (377 aa).

10 helical membrane-spanning segments follow: residues 2 to 22 (IQLL…TPAL), 55 to 75 (VAIL…SVLA), 82 to 102 (ITLS…VGFL), 122 to 142 (MVLQ…FPDA), 162 to 182 (LAFA…NLIA), 195 to 215 (LDGL…LITL), 236 to 256 (PMDL…FLWW), 263 to 283 (IFMG…FAVL), 288 to 308 (LLLV…ILQV), and 343 to 363 (FWVI…GDWL).

Belongs to the glycosyltransferase 4 family. MraY subfamily. Requires Mg(2+) as cofactor.

Its subcellular location is the cell membrane. The enzyme catalyses UDP-N-acetyl-alpha-D-muramoyl-L-alanyl-gamma-D-glutamyl-meso-2,6-diaminopimeloyl-D-alanyl-D-alanine + di-trans,octa-cis-undecaprenyl phosphate = di-trans,octa-cis-undecaprenyl diphospho-N-acetyl-alpha-D-muramoyl-L-alanyl-D-glutamyl-meso-2,6-diaminopimeloyl-D-alanyl-D-alanine + UMP. It functions in the pathway cell wall biogenesis; peptidoglycan biosynthesis. Functionally, catalyzes the initial step of the lipid cycle reactions in the biosynthesis of the cell wall peptidoglycan: transfers peptidoglycan precursor phospho-MurNAc-pentapeptide from UDP-MurNAc-pentapeptide onto the lipid carrier undecaprenyl phosphate, yielding undecaprenyl-pyrophosphoryl-MurNAc-pentapeptide, known as lipid I. This is Phospho-N-acetylmuramoyl-pentapeptide-transferase from Kocuria rhizophila (strain ATCC 9341 / DSM 348 / NBRC 103217 / DC2201).